A 165-amino-acid chain; its full sequence is Small ribosomal subunit protein uS5 (165 aa).

An S5 DRBM domain is found at 10–73; sequence LVEKLVAVDR…EAARRNMITV (64 aa).

Belongs to the universal ribosomal protein uS5 family. In terms of assembly, part of the 30S ribosomal subunit. Contacts proteins S4 and S8.

With S4 and S12 plays an important role in translational accuracy. Functionally, located at the back of the 30S subunit body where it stabilizes the conformation of the head with respect to the body. The protein is Small ribosomal subunit protein uS5 of Acinetobacter baumannii (strain AB307-0294).